We begin with the raw amino-acid sequence, 206 residues long: Small ribosomal subunit protein uS4 (206 aa).

Residues 96–156 form the S4 RNA-binding domain; the sequence is TRLDNVVYRM…EKSRTQARIK (61 aa).

Belongs to the universal ribosomal protein uS4 family. In terms of assembly, part of the 30S ribosomal subunit. Contacts protein S5. The interaction surface between S4 and S5 is involved in control of translational fidelity.

In terms of biological role, one of the primary rRNA binding proteins, it binds directly to 16S rRNA where it nucleates assembly of the body of the 30S subunit. Its function is as follows. With S5 and S12 plays an important role in translational accuracy. This is Small ribosomal subunit protein uS4 from Shewanella halifaxensis (strain HAW-EB4).